A 984-amino-acid polypeptide reads, in one-letter code: Translation initiation factor IF-2 (984 aa).

2 disordered regions span residues 92-267 and 280-392; these read KKRT…ERRR and MNAP…EEHV. Over residues 104 to 123 the composition is skewed to low complexity; that stretch reads PATPEVQPVAEAPAAAPAAP. The span at 124-177 shows a compositional bias: basic and acidic residues; that stretch reads RIDEAELARREEEARRQAELIRRQEEELAEKRRLREEAEAREREQAEKAERAEQ. Residues 193 to 235 are compositionally biased toward low complexity; sequence DAAAAAPAKEAAKPAAAPVAAAAAAAEQQAADTKLAAQTAATQ. Basic and acidic residues-rich tracts occupy residues 236–267 and 291–302; these read AKED…ERRR and KAPEKPQPEKAA. Residues 310–335 are compositionally biased toward low complexity; that stretch reads PAAPAARPGAPAAPGAAAAPGAAGAG. The segment covering 351-361 has biased composition (basic and acidic residues); sequence PAKKKEIKTRG. The segment covering 363–375 has biased composition (gly residues); it reads ASGGVGRGNWRGG. Positions 381 to 392 are enriched in basic and acidic residues; sequence GSNDRGGHEEHV. Positions 484–653 constitute a tr-type G domain; sequence PRAPVVTVMG…LLQAEVLELK (170 aa). The interval 493-500 is G1; that stretch reads GHVDHGKT. 493 to 500 is a GTP binding site; sequence GHVDHGKT. Residues 518 to 522 form a G2 region; sequence GITQH. Residues 539 to 542 are G3; it reads DTPG. GTP contacts are provided by residues 539–543 and 593–596; these read DTPGH and NKID. The G4 stretch occupies residues 593-596; it reads NKID. The tract at residues 629–631 is G5; it reads SAK.

Belongs to the TRAFAC class translation factor GTPase superfamily. Classic translation factor GTPase family. IF-2 subfamily.

Its subcellular location is the cytoplasm. In terms of biological role, one of the essential components for the initiation of protein synthesis. Protects formylmethionyl-tRNA from spontaneous hydrolysis and promotes its binding to the 30S ribosomal subunits. Also involved in the hydrolysis of GTP during the formation of the 70S ribosomal complex. The polypeptide is Translation initiation factor IF-2 (Variovorax paradoxus (strain S110)).